The primary structure comprises 308 residues: MQEKISKFEDFLTQLQQNITTALEQHETNAAKFISDKWQKPDTPDQKLKGYGNSMIIEGGEIFEKGVVAFSRVHGSELPPSATAKRQELAGKSFIATGLSLVIHPRNPFVPTSHANFRIFIAGADTDNPIWWFGGGFDLTPYYPFEEDAIHWHQTAKNICDKHDKTYYPKFKKWCDEYFYLKHRNEYRGVGGLFFDDLNDKSFDECFNFVTDCANSYLDAYIPIVAQRKNIEYSQKHKDFQLYRRGRYVEFNLVFDRGTIFGLQSGGRTESILSSMPPMATWKYNWQPELGSEEEKVYQYIKPRDWIK.

Ser100 serves as a coordination point for substrate. Residues His104 and His114 each contribute to the a divalent metal cation site. Residue His114 is the Proton donor of the active site. Position 116–118 (116–118 (NFR)) interacts with substrate. Residues His153 and His183 each contribute to the a divalent metal cation site. Positions 248-283 (YVEFNLVFDRGTIFGLQSGGRTESILSSMPPMATWK) are important for dimerization. A substrate-binding site is contributed by 266 to 268 (GGR).

The protein belongs to the aerobic coproporphyrinogen-III oxidase family. Homodimer. The cofactor is a divalent metal cation.

The protein resides in the cytoplasm. It carries out the reaction coproporphyrinogen III + O2 + 2 H(+) = protoporphyrinogen IX + 2 CO2 + 2 H2O. Its pathway is porphyrin-containing compound metabolism; protoporphyrin-IX biosynthesis; protoporphyrinogen-IX from coproporphyrinogen-III (O2 route): step 1/1. In terms of biological role, involved in the heme biosynthesis. Catalyzes the aerobic oxidative decarboxylation of propionate groups of rings A and B of coproporphyrinogen-III to yield the vinyl groups in protoporphyrinogen-IX. This Francisella tularensis subsp. holarctica (strain OSU18) protein is Oxygen-dependent coproporphyrinogen-III oxidase.